The following is a 5488-amino-acid chain: Polyketide synthase PksN (5488 aa).

The interval 3–301 (RQLKSPLSEG…NMMAVRSKNI (299 aa)) is condensation. A WD 1 repeat occupies 165 to 205 (QQPSTADYYDFVDWENRMLTGREGEEHLAYWKEQLSGSLPV). Residues 493 to 903 (TYKEVDEKST…EFPGILDQAV (411 aa)) form an adenylation region. The WD 2 repeat unit spans residues 965 to 1006 (RKELEKREIVFNRRKPNHLQLTEIEDQVLRIWEETLKVSGFG). The Carrier 1 domain occupies 983-1058 (LQLTEIEDQV…AISEYILEMK (76 aa)). An O-(pantetheine 4'-phosphoryl)serine modification is found at Ser1018. The Ketosynthase family 3 (KS3) 1 domain maps to 1089–1515 (DDSVAIVGIS…GTNAHAIFEQ (427 aa)). Active-site for beta-ketoacyl synthase 1 activity residues include Cys1261, His1397, and His1437. The interval 1700–1826 (HPLVHHNTSV…GKAELIQLKR (127 aa)) is N-terminal hotdog fold 1. The PKS/mFAS DH 1 domain maps to 1700–1992 (HPLVHHNTSV…TRVMEADIQT (293 aa)). The Proton acceptor; for dehydratase activity 1 role is filled by His1729. Residues 1840–1992 (DQSKMDAASF…TRVMEADIQT (153 aa)) are C-terminal hotdog fold 1. Asp1900 serves as the catalytic Proton donor; for dehydratase activity 1. A WD 3 repeat occupies 2165-2204 (KQAKGDGSKPWKDNGVYLISGGAGGLGHIFAKEIAEQTKN). The Carrier 2 domain occupies 2448-2525 (SLLDKVKAML…AFGKHLSEEY (78 aa)). At Ser2485 the chain carries O-(pantetheine 4'-phosphoryl)serine. Residues 2576 to 3012 (PEPIAIVGIS…GVNAHVIIEE (437 aa)) form the Ketosynthase family 3 (KS3) 2 domain. Residues Cys2747, His2882, and His2928 each act as for beta-ketoacyl synthase 2 activity in the active site. Positions 3038-3109 (KNEARLKEHA…AAEKSGVEDV (72 aa)) form a coiled coil. The segment at 3207 to 3332 (HPLMHQNTSN…GSAVLNPAEN (126 aa)) is N-terminal hotdog fold 2. The region spanning 3207-3492 (HPLMHQNTSN…FRAAEGGSGS (286 aa)) is the PKS/mFAS DH 2 domain. His3236 serves as the catalytic Proton acceptor; for dehydratase activity 2. The segment at 3346 to 3492 (QESHFSVNEV…FRAAEGGSGS (147 aa)) is C-terminal hotdog fold 2. Catalysis depends on Asp3408, which acts as the Proton donor; for dehydratase activity 2. Residues 3626-3655 (DSHENVESVIEKLKENKRHTEDQHIKYEKG) are a coiled coil. The stretch at 3666–3705 (QIDDREISMPWRDKGVYLITGGAGGLGFIFAKEIARQAEQ) is one WD 4 repeat. The Carrier 3 domain occupies 3952 to 4026 (DHIQEVLKQT…AFAGYLSEEY (75 aa)). Ser3986 carries the post-translational modification O-(pantetheine 4'-phosphoryl)serine. The Ketosynthase family 3 (KS3) 3 domain occupies 4076–4511 (PEPIAIVGMS…GVNAHVVIEE (436 aa)). Active-site for beta-ketoacyl synthase 3 activity residues include Cys4245, His4380, and His4427. The N-terminal hotdog fold 3 stretch occupies residues 4706–4830 (HPLIHVNTSD…GSASIRGAGD (125 aa)). In terms of domain architecture, PKS/mFAS DH 3 spans 4706 to 4988 (HPLIHVNTSD…SRLLEEGIQP (283 aa)). Catalysis depends on His4735, which acts as the Proton acceptor; for dehydratase activity 3. The tract at residues 4844–4988 (SLSTLSHDQC…SRLLEEGIQP (145 aa)) is C-terminal hotdog fold 3. Asp4906 acts as the Proton donor; for dehydratase activity 3 in catalysis. Residues 5206-5244 (HNNQPVHTKYKHGGVYVVIGGAGGIGEAWSEYMIRTYQA) form a WD 5 repeat. Positions 5275–5303 (IQADAANREELERAYETMKQTHREINGII) form a coiled coil.

Belongs to the ATP-dependent AMP-binding enzyme family. The cofactor is pantetheine 4'-phosphate.

It localises to the cytoplasm. Its pathway is antibiotic biosynthesis; bacillaene biosynthesis. Involved in some intermediate steps for the synthesis of the antibiotic polyketide bacillaene which is involved in secondary metabolism. This chain is Polyketide synthase PksN (pksN), found in Bacillus subtilis (strain 168).